Here is a 71-residue protein sequence, read N- to C-terminus: Prokaryotic ubiquitin-like protein Pup (71 aa).

The span at 1–18 (MPEKDTGGQHRATRRTEE) shows a compositional bias: basic and acidic residues. Residues 1–36 (MPEKDTGGQHRATRRTEEHDETIDEATATSDVQERR) form a disordered region. An ARC ATPase binding region spans residues 27–65 (TATSDVQERREKLDADVDAILDEIDDVLEENAEEFVRSY). Residues 30-59 (SDVQERREKLDADVDAILDEIDDVLEENAE) are a coiled coil. An Isoglutamyl lysine isopeptide (Glu-Lys) (interchain with K-? in acceptor proteins) cross-link involves residue Glu71.

The protein belongs to the prokaryotic ubiquitin-like protein family. In terms of assembly, strongly interacts with the proteasome-associated ATPase ARC through a hydrophobic interface; the interacting region of Pup lies in its C-terminal half. There is one Pup binding site per ARC hexamer ring.

The protein operates within protein degradation; proteasomal Pup-dependent pathway. Protein modifier that is covalently attached to lysine residues of substrate proteins, thereby targeting them for proteasomal degradation. The tagging system is termed pupylation. This chain is Prokaryotic ubiquitin-like protein Pup, found in Acidothermus cellulolyticus (strain ATCC 43068 / DSM 8971 / 11B).